A 295-amino-acid polypeptide reads, in one-letter code: MVLPSMNKSVEAISNNHLQQPNKFPLINGLADVRDYYVANCLLFKLNKGSLRIENEFGEFIEQSALCLFLLEKDQTITLSMSEIEGHIDFSSLEVSYDLMQKFYKVFYSTRNYNDRELSLKTKPKYFFHADLLPGMSDTFDSILHGVACPRVCSNVSIDDHDYSYFSLMYLISAFVRKPGGFDFLERAIKITTKEKVYNIIISDLTRKWSQAEVAGKLFMSVSSLKRKLAAEEVSFSKIYLDARMNQAIKLLRMGAGNISQVATMCGYDTPSYFIAIFKRHFKITPLSFMRTMNH.

Residues 195–292 enclose the HTH araC/xylS-type domain; the sequence is EKVYNIIISD…KITPLSFMRT (98 aa). 2 DNA-binding regions (H-T-H motif) span residues 212 to 233 and 259 to 282; these read AEVAGKLFMSVSSLKRKLAAEE and ISQVATMCGYDTPSYFIAIFKRHF.

In terms of biological role, positive regulator of the expression of the invasion-associated type III secretion system encoded within SPI-1 (pathogenicity island 1). This is Transcriptional regulator SirC (sirC) from Salmonella typhi.